Reading from the N-terminus, the 337-residue chain is Inositol 2-dehydrogenase (337 aa).

Belongs to the Gfo/Idh/MocA family. In terms of assembly, homotetramer.

The catalysed reaction is myo-inositol + NAD(+) = scyllo-inosose + NADH + H(+). Its function is as follows. Involved in the oxidation of myo-inositol (MI) to 2-keto-myo-inositol (2KMI or 2-inosose). This Arthrobacter sp. (strain FB24) protein is Inositol 2-dehydrogenase.